A 196-amino-acid chain; its full sequence is Pyroglutamyl-peptidase 1-like protein (196 aa).

Catalysis depends on residues glutamate 65, cysteine 127, and histidine 146.

The protein belongs to the peptidase C15 family.

The sequence is that of Pyroglutamyl-peptidase 1-like protein (PGPEP1L) from Homo sapiens (Human).